We begin with the raw amino-acid sequence, 96 residues long: Secreted RxLR effector protein 123 (96 aa).

The first 22 residues, 1-22 (MVGAYYVGIALLVAGGSQTAAG), serve as a signal peptide directing secretion. A RxLR-dEER motif is present at residues 49–70 (RFLRKSRNPKDNLMLSEANEER). Positions 57-96 (PKDNLMLSEANEERTPSSPSNSLTEFIVSEPITTNVMRTE) are disordered. Positions 87-96 (PITTNVMRTE) are enriched in polar residues.

This sequence belongs to the RxLR effector family.

The protein localises to the secreted. Its subcellular location is the host nucleus. It localises to the host cytoplasm. Secreted effector that dos not suppress the host cell death induced by cell death-inducing proteins. The polypeptide is Secreted RxLR effector protein 123 (Plasmopara viticola (Downy mildew of grapevine)).